The chain runs to 363 residues: Adenosine kinase (363 aa).

Residues alanine 185, isoleucine 188, and alanine 191 each coordinate Mg(2+). The active site involves aspartate 318.

The protein belongs to the carbohydrate kinase PfkB family. Mg(2+) is required as a cofactor.

The enzyme catalyses adenosine + ATP = AMP + ADP + H(+). It participates in purine metabolism; AMP biosynthesis via salvage pathway; AMP from adenosine: step 1/1. In terms of biological role, ATP-dependent phosphorylation of adenosine and other related nucleoside analogs to monophosphate derivatives. It is a key purine metabolic enzyme in the opportunistic parasitic protozoan toxoplasma gondii as it cannot synthesize purines de novo. In Toxoplasma gondii, this protein is Adenosine kinase (AK).